The sequence spans 56 residues: Large ribosomal subunit protein eL20 (56 aa).

Positions 1-24 (MSTYTVRGSFPARDGPQQFEKEVE) are disordered.

It belongs to the eukaryotic ribosomal protein eL20 family. In terms of assembly, part of the 50S ribosomal subunit. Binds 23S rRNA.

The chain is Large ribosomal subunit protein eL20 from Haloarcula marismortui (strain ATCC 43049 / DSM 3752 / JCM 8966 / VKM B-1809) (Halobacterium marismortui).